A 792-amino-acid polypeptide reads, in one-letter code: Kinesin-related protein 2 (792 aa).

Disordered regions lie at residues threonine 22 to threonine 50 and asparagine 162 to glutamine 183. Polar residues predominate over residues alanine 34–threonine 50. The stretch at arginine 284 to valine 423 forms a coiled coil. Residues asparagine 437 to cysteine 781 enclose the Kinesin motor domain. ATP is bound at residue glycine 528–threonine 535.

Belongs to the TRAFAC class myosin-kinesin ATPase superfamily. Kinesin family. NCD subfamily.

It is found in the nucleus. Its subcellular location is the cytoplasm. It localises to the cytoskeleton. The protein resides in the spindle. Functionally, microtubule-dependent motor that is probably involved in microtubule organization in the mitotic spindle. The chain is Kinesin-related protein 2 (kif2) from Dictyostelium discoideum (Social amoeba).